The sequence spans 150 residues: Deoxyuridine 5'-triphosphate nucleotidohydrolase (150 aa).

Substrate is bound by residues 70–72 (RSG), asparagine 83, and 87–89 (TID).

Belongs to the dUTPase family. It depends on Mg(2+) as a cofactor.

It catalyses the reaction dUTP + H2O = dUMP + diphosphate + H(+). Its pathway is pyrimidine metabolism; dUMP biosynthesis; dUMP from dCTP (dUTP route): step 2/2. In terms of biological role, this enzyme is involved in nucleotide metabolism: it produces dUMP, the immediate precursor of thymidine nucleotides and it decreases the intracellular concentration of dUTP so that uracil cannot be incorporated into DNA. This Desulfotalea psychrophila (strain LSv54 / DSM 12343) protein is Deoxyuridine 5'-triphosphate nucleotidohydrolase.